The sequence spans 203 residues: Superoxide dismutase [Mn] (203 aa).

Mn(2+) is bound by residues H27, H81, D164, and H168.

This sequence belongs to the iron/manganese superoxide dismutase family. Homodimer. It depends on Mn(2+) as a cofactor.

The enzyme catalyses 2 superoxide + 2 H(+) = H2O2 + O2. Functionally, destroys superoxide anion radicals which are normally produced within the cells and which are toxic to biological systems. This Pseudomonas putida (Arthrobacter siderocapsulatus) protein is Superoxide dismutase [Mn] (sodA).